A 248-amino-acid chain; its full sequence is HTH-type transcriptional regulator GgaR (248 aa).

The 69-residue stretch at 22–90 (TPLYIKFAET…RGYGTQINNI (69 aa)) folds into the HTH gntR-type domain. Positions 50-69 (ERDLSQLTGVSRITVRKAMQ) form a DNA-binding region, H-T-H motif.

With respect to regulation, senses ADP-glucose (ADPG), which is the substrate for glycogen elongation, as an effector. In the presence of ADPG, GgaR becomes inactive and derepresses the yegTUV operon, leading to glycogen accumulation. In contrast, in the absence of glucose, the concentration of ADPG decreases, GgaR becomes active, and glycogen accumulation is repressed. In terms of biological role, transcriptional regulator that regulates glycogen accumulation in response to the amount of glucose available to the cell. Acts as a repressor of the yegTUV operon, which may be involved in glycogen accumulation. The chain is HTH-type transcriptional regulator GgaR from Escherichia coli O6:H1 (strain CFT073 / ATCC 700928 / UPEC).